We begin with the raw amino-acid sequence, 307 residues long: UDP-N-acetylenolpyruvoylglucosamine reductase (307 aa).

One can recognise an FAD-binding PCMH-type domain in the interval 33-197 (TGGNADFYIT…LEAAFTLAPG (165 aa)). Residue R176 is part of the active site. Catalysis depends on S226, which acts as the Proton donor. E296 is a catalytic residue.

The protein belongs to the MurB family. Requires FAD as cofactor.

Its subcellular location is the cytoplasm. The enzyme catalyses UDP-N-acetyl-alpha-D-muramate + NADP(+) = UDP-N-acetyl-3-O-(1-carboxyvinyl)-alpha-D-glucosamine + NADPH + H(+). It participates in cell wall biogenesis; peptidoglycan biosynthesis. Functionally, cell wall formation. The protein is UDP-N-acetylenolpyruvoylglucosamine reductase of Staphylococcus aureus (strain Mu3 / ATCC 700698).